The primary structure comprises 245 residues: Biosynthetic peptidoglycan transglycosylase (245 aa).

Residues 20–42 (VYAGSVFAGAWLATQLFYLAQIA) form a helical membrane-spanning segment.

Belongs to the glycosyltransferase 51 family.

The protein localises to the cell inner membrane. It catalyses the reaction [GlcNAc-(1-&gt;4)-Mur2Ac(oyl-L-Ala-gamma-D-Glu-L-Lys-D-Ala-D-Ala)](n)-di-trans,octa-cis-undecaprenyl diphosphate + beta-D-GlcNAc-(1-&gt;4)-Mur2Ac(oyl-L-Ala-gamma-D-Glu-L-Lys-D-Ala-D-Ala)-di-trans,octa-cis-undecaprenyl diphosphate = [GlcNAc-(1-&gt;4)-Mur2Ac(oyl-L-Ala-gamma-D-Glu-L-Lys-D-Ala-D-Ala)](n+1)-di-trans,octa-cis-undecaprenyl diphosphate + di-trans,octa-cis-undecaprenyl diphosphate + H(+). Its pathway is cell wall biogenesis; peptidoglycan biosynthesis. In terms of biological role, peptidoglycan polymerase that catalyzes glycan chain elongation from lipid-linked precursors. This chain is Biosynthetic peptidoglycan transglycosylase, found in Burkholderia lata (strain ATCC 17760 / DSM 23089 / LMG 22485 / NCIMB 9086 / R18194 / 383).